Here is an 85-residue protein sequence, read N- to C-terminus: Phycobilisome 9.7 kDa linker polypeptide, phycocyanin-associated, rod (85 aa).

One can recognise a CpcD-like domain in the interval 16–74; that stretch reads NRVFVYEVEGLRQNEQTDNNRYQIRNSSTIEIQVPYSRMNEEDRRITRLGGRIVNIRPA.

It belongs to the phycobilisome linker protein family.

Its subcellular location is the cellular thylakoid membrane. Its function is as follows. Rod linker protein, associated with phycocyanin. Linker polypeptides determine the state of aggregation and the location of the disk-shaped phycobiliprotein units within the phycobilisome and modulate their spectroscopic properties in order to mediate a directed and optimal energy transfer. The sequence is that of Phycobilisome 9.7 kDa linker polypeptide, phycocyanin-associated, rod (cpcD2) from Microchaete diplosiphon (Fremyella diplosiphon).